The following is a 51-amino-acid chain: Large ribosomal subunit protein bL33 (51 aa).

Belongs to the bacterial ribosomal protein bL33 family.

This Vesicomyosocius okutanii subsp. Calyptogena okutanii (strain HA) protein is Large ribosomal subunit protein bL33.